Reading from the N-terminus, the 85-residue chain is Small ribosomal subunit protein bS16 (85 aa).

This sequence belongs to the bacterial ribosomal protein bS16 family.

The protein is Small ribosomal subunit protein bS16 of Rubrobacter xylanophilus (strain DSM 9941 / JCM 11954 / NBRC 16129 / PRD-1).